The chain runs to 474 residues: MTGRVGNPKDHAVVIGASIAGLCAARVLSDFYSTVTVFERDELPEAPANRATVPQDRHLHMLMARGAQEFDSLFPGLLHDMVAAGVPMLENRPDCIYLGAAGHVLGTGHTLRKEFTAYVPSRPHLEWQLRRRVLQLSNVQIVRRLVTEPQFERRQQRVVGVLLDSPGSGQDREREEFIAADLVVDAAGRGTRLPVWLTQWGYRRPAEDTVDIGISYASHQFRIPDGLIAEKVVVAGASHDQSLGLGMLCYEDGTWVLTTFGVADAKPPPTFDEMRALADKLLPARFTAALAQAQPIGCPAFHAFPASRWRRYDKLERFPRGIVPFGDAVASFNPTFGQGMTMTSLQAGHLRRALKARNSAMKGDLAAELNRATAKTTYPVWMMNAIGDISFHHATAEPLPRWWRPAGSLFDQFLGAAETDPVLAEWFLRRFSLLDSLYMVPSVPIIGRAIAHNLRLWLKEQRERRQPVTTRRSP.

Residues 1–4 constitute a propeptide that is removed on maturation; the sequence is MTGR.

This is Protein Rv3254 from Mycobacterium tuberculosis (strain ATCC 25618 / H37Rv).